Consider the following 299-residue polypeptide: Protoheme IX farnesyltransferase 1 (299 aa).

9 helical membrane-spanning segments follow: residues 25–45 (VVVL…RAGV), 47–67 (WSVL…AAVV), 95–115 (LPAL…LLAF), 119–139 (LTAW…TGFL), 147–167 (IVIG…AVSG), 173–193 (PLLL…ALAI), 217–237 (ALHI…PYAI), 243–263 (LYLA…WVLY), and 279–299 (IGYL…LLNL).

Belongs to the UbiA prenyltransferase family. Protoheme IX farnesyltransferase subfamily.

The protein resides in the cell inner membrane. It carries out the reaction heme b + (2E,6E)-farnesyl diphosphate + H2O = Fe(II)-heme o + diphosphate. Its pathway is porphyrin-containing compound metabolism; heme O biosynthesis; heme O from protoheme: step 1/1. Converts heme B (protoheme IX) to heme O by substitution of the vinyl group on carbon 2 of heme B porphyrin ring with a hydroxyethyl farnesyl side group. This is Protoheme IX farnesyltransferase 1 from Pseudomonas entomophila (strain L48).